The sequence spans 448 residues: Exodeoxyribonuclease 7 large subunit (448 aa).

This sequence belongs to the XseA family. As to quaternary structure, heterooligomer composed of large and small subunits.

It localises to the cytoplasm. Its subcellular location is the nucleoid. It carries out the reaction Exonucleolytic cleavage in either 5'- to 3'- or 3'- to 5'-direction to yield nucleoside 5'-phosphates.. Bidirectionally degrades single-stranded DNA into large acid-insoluble oligonucleotides, which are then degraded further into small acid-soluble oligonucleotides. The chain is Exodeoxyribonuclease 7 large subunit from Bacillus subtilis (strain 168).